Reading from the N-terminus, the 637-residue chain is tRNA uridine 5-carboxymethylaminomethyl modification enzyme MnmG (637 aa).

14 to 19 contacts FAD; sequence GAGHAG. 279-293 is an NAD(+) binding site; it reads GPRYCPSIEDKVVRF.

Belongs to the MnmG family. Homodimer. Heterotetramer of two MnmE and two MnmG subunits. FAD serves as cofactor.

It is found in the cytoplasm. NAD-binding protein involved in the addition of a carboxymethylaminomethyl (cmnm) group at the wobble position (U34) of certain tRNAs, forming tRNA-cmnm(5)s(2)U34. This Desulfitobacterium hafniense (strain DSM 10664 / DCB-2) protein is tRNA uridine 5-carboxymethylaminomethyl modification enzyme MnmG.